The sequence spans 750 residues: Xylosyl- and glucuronyltransferase LARGE2s (750 aa).

The Cytoplasmic segment spans residues 1-10; that stretch reads MLCPCRGKLK. Residues 11–31 form a helical; Signal-anchor for type II membrane protein membrane-spanning segment; the sequence is LLVVSLSFVILFTWLYLLVGN. Over 32 to 750 the chain is Lumenal; sequence SENGRSLLLS…LKYLTAQRNI (719 aa). N-linked (GlcNAc...) asparagine glycosylation is found at N116, N142, and N228. Residues 132 to 407 form a xylosyltransferase activity region; it reads LHVACVCAGH…FLEYDGNLLR (276 aa). D236 and D238 together coordinate Mn(2+). The N-linked (GlcNAc...) asparagine glycan is linked to N266. The segment at 408-750 is glucuronyltransferase activity; the sequence is RELFGCPSQA…LKYLTAQRNI (343 aa). Residues D557 and D559 each coordinate Mn(2+).

This sequence in the C-terminal section; belongs to the glycosyltransferase 49 family. The protein in the N-terminal section; belongs to the glycosyltransferase 8 family. It depends on Mn(2+) as a cofactor.

The protein localises to the golgi apparatus membrane. It carries out the reaction 3-O-[beta-D-GlcA-(1-&gt;3)-beta-D-Xyl-(1-&gt;4)-Rib-ol-P-Rib-ol-P-3-beta-D-GalNAc-(1-&gt;3)-beta-D-GlcNAc-(1-&gt;4)-(O-6-P-alpha-D-Man)]-Thr-[protein] + UDP-alpha-D-xylose = 3-O-[alpha-D-Xyl-(1-&gt;3)-beta-D-GlcA-(1-&gt;4)-beta-D-Xyl-(1-&gt;4)-Rib-ol-P-Rib-ol-P-3-beta-D-GalNAc-(1-&gt;3)-beta-D-GlcNAc-(1-&gt;4)-(O-6-P-alpha-D-Man)]-Thr-[protein] + UDP + H(+). The enzyme catalyses 3-O-{(1-&gt;[3)-alpha-D-Xyl-(1-&gt;3)-beta-D-GlcA-(1-&gt;](n)-4)-beta-D-Xyl-(1-&gt;4)-Rib-ol-P-Rib-ol-P-3-beta-D-GalNAc-(1-&gt;3)-beta-D-GlcNAc-(1-&gt;4)-O-6-P-alpha-D-Man}-L-Thr-[protein] + UDP-alpha-D-glucuronate = 3-O-{beta-D-GlcA-(1-&gt;[3)-alpha-D-Xyl-(1-&gt;3)-beta-D-GlcA-(1-&gt;](n)-4)-beta-D-Xyl-(1-&gt;4)-Rib-ol-P-Rib-ol-P-3-beta-D-GalNAc-(1-&gt;3)-beta-D-GlcNAc-(1-&gt;4)-O-6-P-alpha-D-Man}-L-Thr-[protein] + UDP + H(+). The catalysed reaction is 3-O-{beta-D-GlcA-(1-&gt;[3)-alpha-D-Xyl-(1-&gt;3)-beta-D-GlcA-(1-&gt;](n)-4)-beta-D-Xyl-(1-&gt;4)-Rib-ol-P-Rib-ol-P-3-beta-D-GalNAc-(1-&gt;3)-beta-D-GlcNAc-(1-&gt;4)-O-6-P-alpha-D-Man}-L-Thr-[protein] + UDP-alpha-D-xylose = 3-O-{(1-&gt;[3)-alpha-D-Xyl-(1-&gt;3)-beta-D-GlcA-(1-&gt;](n+1)-4)-beta-D-Xyl-(1-&gt;4)-Rib-ol-P-Rib-ol-P-3-beta-D-GalNAc-(1-&gt;3)-beta-D-GlcNAc-(1-&gt;4)-O-6-P-alpha-D-Man}-L-Thr-[protein] + UDP + H(+). Its pathway is protein modification; protein glycosylation. Its function is as follows. Bifunctional glycosyltransferase with both alpha-1,3-xylosyltransferase and beta-1,3-glucuronyltransferase activities involved in the maturation of alpha-dystroglycan (DAG1) by glycosylation leading to DAG1 binding to laminin G-like domain-containing extracellular proteins with high affinity and in a phosphorylated-O-mannosyl trisaccharide dependent manner. Elongates the glucuronyl-beta-1,4-xylose-beta disaccharide primer structure by adding repeating units [-3-Xylose-alpha-1,3-GlcA-beta-1-] to produce a heteropolysaccharide. Supports the maturation of DAG1 more effectively than LARGE1. In addition, can modify both heparan sulfate (HS)- and chondroitin/dermatan sulfate (CS/DS)-proteoglycans (PGs), namely GPC4, with a glycosaminoglycan (GAG)-like polysaccharide composed of xylose and glucuronic acid to confer laminin binding. In Danio rerio (Zebrafish), this protein is Xylosyl- and glucuronyltransferase LARGE2s.